The sequence spans 359 residues: 3-dehydroquinate synthase (359 aa).

NAD(+) is bound by residues 71–76, 105–109, 129–130, K142, K151, and 169–172; these read DGEQYK, GVIGD, TT, and CLST. 3 residues coordinate Zn(2+): E184, H247, and H264.

It belongs to the sugar phosphate cyclases superfamily. Dehydroquinate synthase family. Requires Co(2+) as cofactor. Zn(2+) serves as cofactor. The cofactor is NAD(+).

It is found in the cytoplasm. The catalysed reaction is 7-phospho-2-dehydro-3-deoxy-D-arabino-heptonate = 3-dehydroquinate + phosphate. Its pathway is metabolic intermediate biosynthesis; chorismate biosynthesis; chorismate from D-erythrose 4-phosphate and phosphoenolpyruvate: step 2/7. Catalyzes the conversion of 3-deoxy-D-arabino-heptulosonate 7-phosphate (DAHP) to dehydroquinate (DHQ). In Shewanella halifaxensis (strain HAW-EB4), this protein is 3-dehydroquinate synthase.